The primary structure comprises 325 residues: Phenylalanine--tRNA ligase alpha subunit (325 aa).

Residue E251 coordinates Mg(2+).

The protein belongs to the class-II aminoacyl-tRNA synthetase family. Phe-tRNA synthetase alpha subunit type 1 subfamily. In terms of assembly, tetramer of two alpha and two beta subunits. Mg(2+) serves as cofactor.

The protein resides in the cytoplasm. It carries out the reaction tRNA(Phe) + L-phenylalanine + ATP = L-phenylalanyl-tRNA(Phe) + AMP + diphosphate + H(+). The polypeptide is Phenylalanine--tRNA ligase alpha subunit (pheS) (Thermotoga maritima (strain ATCC 43589 / DSM 3109 / JCM 10099 / NBRC 100826 / MSB8)).